The primary structure comprises 293 residues: Probable aspartoacylase (293 aa).

Zn(2+) is bound by residues H14 and E17. Substrate-binding positions include R56 and 63–64 (NR). H106 serves as a coordination point for Zn(2+). Residues E165 and Y276 each contribute to the substrate site.

It belongs to the AspA/AstE family. Aspartoacylase subfamily. Requires Zn(2+) as cofactor.

It catalyses the reaction an N-acyl-L-aspartate + H2O = a carboxylate + L-aspartate. The protein is Probable aspartoacylase of Trichodesmium erythraeum (strain IMS101).